We begin with the raw amino-acid sequence, 243 residues long: Mesoderm posterior protein 1 (243 aa).

The disordered stretch occupies residues Met1–Lys86. Positions Asp27–Trp36 are enriched in polar residues. One can recognise a bHLH domain in the interval Gly76–Leu130. Positions Cys153–Pro157 match the CPLCP motif. The interval Ala204 to Leu228 is disordered.

As to expression, no expression was detected in adult tissues except the testis. Expression in the testis was regulated developmentally; expressed 2 weeks after birth, and increases, reaching the full expression level in mature testes.

It is found in the nucleus. Functionally, transcription factor. Plays a role in the epithelialization of somitic mesoderm and in the development of cardiac mesoderm. Defines the rostrocaudal patterning of the somites by participating in distinct Notch pathways. The polypeptide is Mesoderm posterior protein 1 (Mesp1) (Mus musculus (Mouse)).